Here is a 290-residue protein sequence, read N- to C-terminus: Homeobox protein EMX1 (290 aa).

Positions P192–K251 form a DNA-binding region, homeobox. Positions R249 to D290 are disordered. The span at Q250 to K263 shows a compositional bias: basic and acidic residues.

This sequence belongs to the EMX homeobox family. Interacts with WRD11 (via the N-terminal and the central portion of the protein); the interaction associates EMX1 with GLI3. Cerebral cortex.

The protein localises to the nucleus. It is found in the cytoplasm. Transcription factor, which in cooperation with EMX2, acts to generate the boundary between the roof and archipallium in the developing brain. May function in combinations with OTX1/2 to specify cell fates in the developing central nervous system. This Homo sapiens (Human) protein is Homeobox protein EMX1.